The sequence spans 230 residues: Urease accessory protein UreF (230 aa).

Belongs to the UreF family. As to quaternary structure, ureD, UreF and UreG form a complex that acts as a GTP-hydrolysis-dependent molecular chaperone, activating the urease apoprotein by helping to assemble the nickel containing metallocenter of UreC. The UreE protein probably delivers the nickel.

The protein resides in the cytoplasm. Required for maturation of urease via the functional incorporation of the urease nickel metallocenter. The polypeptide is Urease accessory protein UreF (Allorhizobium ampelinum (strain ATCC BAA-846 / DSM 112012 / S4) (Agrobacterium vitis (strain S4))).